An 83-amino-acid polypeptide reads, in one-letter code: Small ribosomal subunit protein eS21 (83 aa).

It belongs to the eukaryotic ribosomal protein eS21 family. As to quaternary structure, component of the 40S small ribosomal subunit.

The protein localises to the cytoplasm. The protein resides in the cytosol. It localises to the rough endoplasmic reticulum. This chain is Small ribosomal subunit protein eS21 (RpS21), found in Ixodes scapularis (Black-legged tick).